Here is a 602-residue protein sequence, read N- to C-terminus: Prostaglandin G/H synthase 1 (602 aa).

The first 26 residues, 1–26, serve as a signal peptide directing secretion; that stretch reads MSRRSLSLQFPLLLLLLLLPPPPVLL. The EGF-like domain occupies 34-72; sequence PVNPCCYYPCQNQGVCVRFGLDHYQCDCTRTGYSGPNCT. Cystine bridges form between Cys-38–Cys-49, Cys-39–Cys-161, Cys-43–Cys-59, and Cys-61–Cys-71. 3 N-linked (GlcNAc...) asparagine glycosylation sites follow: Asn-70, Asn-106, and Asn-146. His-209 functions as the Proton acceptor in the catalytic mechanism. Tyr-387 serves as the catalytic For cyclooxygenase activity. Residue His-390 coordinates heme b. Asn-412 carries N-linked (GlcNAc...) asparagine glycosylation. Cys-571 and Cys-577 are disulfide-bonded.

Belongs to the prostaglandin G/H synthase family. Homodimer. Requires heme b as cofactor.

It is found in the microsome membrane. It localises to the endoplasmic reticulum membrane. The catalysed reaction is (5Z,8Z,11Z,14Z)-eicosatetraenoate + AH2 + 2 O2 = prostaglandin H2 + A + H2O. The enzyme catalyses (5Z,8Z,11Z,14Z)-eicosatetraenoate + 2 O2 = prostaglandin G2. It catalyses the reaction prostaglandin G2 + AH2 = prostaglandin H2 + A + H2O. It carries out the reaction (9Z,12Z)-octadecadienoate + AH2 + O2 = (9R)-hydroxy-(10E,12Z)-octadecadienoate + A + H2O. The catalysed reaction is (9Z,12Z)-octadecadienoate + AH2 + O2 = (9S)-hydroxy-(10E,12Z)-octadecadienoate + A + H2O. The enzyme catalyses (9Z,12Z)-octadecadienoate + AH2 + O2 = (13S)-hydroxy-(9Z,11E)-octadecadienoate + A + H2O. It catalyses the reaction (9Z,12Z)-octadecadienoate + AH2 + O2 = (13R)-hydroxy-(9Z,11E)-octadecadienoate + A + H2O. It functions in the pathway lipid metabolism; prostaglandin biosynthesis. The cyclooxygenase activity is inhibited by nonsteroidal anti-inflammatory drugs (NSAIDs) including ibuprofen, flurbiprofen, ketoprofen, naproxen, flurbiprofen, anirolac, fenclofenac and diclofenac. Its function is as follows. Dual cyclooxygenase and peroxidase that plays an important role in the biosynthesis pathway of prostanoids, a class of C20 oxylipins mainly derived from arachidonate ((5Z,8Z,11Z,14Z)-eicosatetraenoate, AA, C20:4(n-6)), with a particular role in the inflammatory response. The cyclooxygenase activity oxygenates AA to the hydroperoxy endoperoxide prostaglandin G2 (PGG2), and the peroxidase activity reduces PGG2 to the hydroxy endoperoxide prostaglandin H2 (PGH2), the precursor of all 2-series prostaglandins and thromboxanes. This complex transformation is initiated by abstraction of hydrogen at carbon 13 (with S-stereochemistry), followed by insertion of molecular O2 to form the endoperoxide bridge between carbon 9 and 11 that defines prostaglandins. The insertion of a second molecule of O2 (bis-oxygenase activity) yields a hydroperoxy group in PGG2 that is then reduced to PGH2 by two electrons. Involved in the constitutive production of prostanoids in particular in the stomach and platelets. In gastric epithelial cells, it is a key step in the generation of prostaglandins, such as prostaglandin E2 (PGE2), which plays an important role in cytoprotection. In platelets, it is involved in the generation of thromboxane A2 (TXA2), which promotes platelet activation and aggregation, vasoconstriction and proliferation of vascular smooth muscle cells. Can also use linoleate (LA, (9Z,12Z)-octadecadienoate, C18:2(n-6)) as substrate and produce hydroxyoctadecadienoates (HODEs) in a regio- and stereospecific manner, being (9R)-HODE ((9R)-hydroxy-(10E,12Z)-octadecadienoate) and (13S)-HODE ((13S)-hydroxy-(9Z,11E)-octadecadienoate) its major products. The protein is Prostaglandin G/H synthase 1 of Rattus norvegicus (Rat).